The primary structure comprises 69 residues: KKNDYPVDTAKRNCMLDCNVWDDEGYCDNFCKGRKAESGYCYKLKAACYCYGLPDDSPTKTSGRCNPNV.

The LCN-type CS-alpha/beta domain maps to 2–66 (KNDYPVDTAK…SPTKTSGRCN (65 aa)). Intrachain disulfides connect C14-C65, C18-C41, C27-C48, and C31-C50.

Belongs to the long (4 C-C) scorpion toxin superfamily. Sodium channel inhibitor family. In terms of tissue distribution, expressed by the venom gland.

It localises to the secreted. In terms of biological role, inhibits voltage-gated sodium channels (Nav). The sequence is that of Sodium channel toxin from Tityus metuendus (Scorpion).